A 494-amino-acid chain; its full sequence is 4-trimethylaminobutyraldehyde dehydrogenase (494 aa).

S2 is subject to N-acetylserine. An N6-acetyllysine; alternate modification is found at K30. The residue at position 30 (K30) is an N6-succinyllysine; alternate. N6-succinyllysine is present on K59. NAD(+) contacts are provided by residues K180 and 232 to 236 (GSVPT). E254 functions as the Proton acceptor in the catalytic mechanism. C288 functions as the Nucleophile in the catalytic mechanism. Position 298 is an N6-acetyllysine (K298). K303 carries the post-translational modification N6-acetyllysine; alternate. K303 is modified (N6-succinyllysine; alternate). K344 bears the N6-acetyllysine mark. E391 is an NAD(+) binding site.

It belongs to the aldehyde dehydrogenase family. In terms of assembly, homotetramer.

The protein localises to the cytoplasm. It localises to the cytosol. It carries out the reaction 4-(trimethylamino)butanal + NAD(+) + H2O = 4-(trimethylamino)butanoate + NADH + 2 H(+). The catalysed reaction is an aldehyde + NAD(+) + H2O = a carboxylate + NADH + 2 H(+). The enzyme catalyses 4-aminobutanal + NAD(+) + H2O = 4-aminobutanoate + NADH + 2 H(+). It catalyses the reaction formaldehyde + NAD(+) + H2O = formate + NADH + 2 H(+). It carries out the reaction acetaldehyde + NAD(+) + H2O = acetate + NADH + 2 H(+). The catalysed reaction is imidazole-4-acetaldehyde + NAD(+) + H2O = imidazole-4-acetate + NADH + 2 H(+). The enzyme catalyses acrolein + NAD(+) + H2O = acrylate + NADH + 2 H(+). It catalyses the reaction (5-hydroxyindol-3-yl)acetaldehyde + NAD(+) + H2O = (5-hydroxyindol-3-yl)acetate + NADH + 2 H(+). It carries out the reaction 3,4-dihydroxyphenylacetaldehyde + NAD(+) + H2O = 3,4-dihydroxyphenylacetate + NADH + 2 H(+). The catalysed reaction is spermine monoaldehyde + NAD(+) + H2O = N-(2-carboxyethyl)spermidine + NADH + 2 H(+). The enzyme catalyses propanal + NAD(+) + H2O = propanoate + NADH + 2 H(+). It catalyses the reaction butanal + NAD(+) + H2O = butanoate + NADH + 2 H(+). It carries out the reaction pentanal + NAD(+) + H2O = pentanoate + NADH + 2 H(+). The catalysed reaction is hexanal + NAD(+) + H2O = hexanoate + NADH + 2 H(+). The protein operates within amine and polyamine biosynthesis; carnitine biosynthesis. Its function is as follows. Converts gamma-trimethylaminobutyraldehyde into gamma-butyrobetaine with high efficiency (in vitro). Can catalyze the irreversible oxidation of a broad range of aldehydes to the corresponding acids in an NAD-dependent reaction, but with low efficiency. Catalyzes the oxidation of aldehydes arising from biogenic amines and polyamines. This is 4-trimethylaminobutyraldehyde dehydrogenase (ALDH9A1) from Pongo abelii (Sumatran orangutan).